Here is a 231-residue protein sequence, read N- to C-terminus: 7-cyano-7-deazaguanine synthase (231 aa).

11 to 21 is a binding site for ATP; the sequence is LSAGLDSTVNA. Zn(2+) is bound by residues C197, C205, C208, and C211.

It belongs to the QueC family. Requires Zn(2+) as cofactor.

It catalyses the reaction 7-carboxy-7-deazaguanine + NH4(+) + ATP = 7-cyano-7-deazaguanine + ADP + phosphate + H2O + H(+). Its pathway is purine metabolism; 7-cyano-7-deazaguanine biosynthesis. Its function is as follows. Catalyzes the ATP-dependent conversion of 7-carboxy-7-deazaguanine (CDG) to 7-cyano-7-deazaguanine (preQ(0)). This Bdellovibrio bacteriovorus (strain ATCC 15356 / DSM 50701 / NCIMB 9529 / HD100) protein is 7-cyano-7-deazaguanine synthase.